Here is a 1248-residue protein sequence, read N- to C-terminus: von Willebrand factor A domain-containing protein 5B2 (1248 aa).

Residues 1 to 138 (MPGLYCPTSW…TMTVTLCSSR (138 aa)) enclose the VIT domain. Residues 184-204 (VGSPEEERPTWEQPTATPDVF) form a disordered region. The region spanning 354–527 (ELLFLLDGSG…KALEPALSDI (174 aa)) is the VWFA domain. Disordered stretches follow at residues 590-650 (PEEV…SSDT), 672-710 (SASP…QQGC), 751-789 (ALAG…EPGQ), 1008-1037 (SKSA…RLSL), and 1126-1168 (DSAT…SSDL). Residues 595–619 (SATSPGTEPTHTTEPLGTGTVSAEL) are compositionally biased toward polar residues. 3 stretches are compositionally biased toward low complexity: residues 684–701 (SSES…GSRP), 751–764 (ALAG…SGRA), and 780–789 (PDGLGPEPGQ). Residues 1127–1145 (SATASCSQSPSSGSEGPGQ) are compositionally biased toward low complexity. Over residues 1159–1168 (GMERQDSSDL) the composition is skewed to basic and acidic residues.

This is von Willebrand factor A domain-containing protein 5B2 (Vwa5b2) from Mus musculus (Mouse).